The sequence spans 236 residues: Biosynthetic peptidoglycan transglycosylase (236 aa).

The helical transmembrane segment at 12-31 (ALLWFAAGSALVVLVLRWVP) threads the bilayer.

The protein belongs to the glycosyltransferase 51 family.

Its subcellular location is the cell inner membrane. It catalyses the reaction [GlcNAc-(1-&gt;4)-Mur2Ac(oyl-L-Ala-gamma-D-Glu-L-Lys-D-Ala-D-Ala)](n)-di-trans,octa-cis-undecaprenyl diphosphate + beta-D-GlcNAc-(1-&gt;4)-Mur2Ac(oyl-L-Ala-gamma-D-Glu-L-Lys-D-Ala-D-Ala)-di-trans,octa-cis-undecaprenyl diphosphate = [GlcNAc-(1-&gt;4)-Mur2Ac(oyl-L-Ala-gamma-D-Glu-L-Lys-D-Ala-D-Ala)](n+1)-di-trans,octa-cis-undecaprenyl diphosphate + di-trans,octa-cis-undecaprenyl diphosphate + H(+). The protein operates within cell wall biogenesis; peptidoglycan biosynthesis. Functionally, peptidoglycan polymerase that catalyzes glycan chain elongation from lipid-linked precursors. This is Biosynthetic peptidoglycan transglycosylase from Pseudomonas syringae pv. tomato (strain ATCC BAA-871 / DC3000).